The following is a 368-amino-acid chain: Protein-glutamate methylesterase/protein-glutamine glutaminase (368 aa).

The 118-residue stretch at 9-126 (RVLVVDDSAF…SINMRELKDE (118 aa)) folds into the Response regulatory domain. A 4-aspartylphosphate modification is found at aspartate 60. The region spanning 161-354 (SVPARIAVAI…ETVVRAVEMI (194 aa)) is the CheB-type methylesterase domain. Active-site residues include serine 173, histidine 200, and aspartate 296.

This sequence belongs to the CheB family. Post-translationally, phosphorylated by CheA. Phosphorylation of the N-terminal regulatory domain activates the methylesterase activity.

The protein localises to the cytoplasm. It catalyses the reaction [protein]-L-glutamate 5-O-methyl ester + H2O = L-glutamyl-[protein] + methanol + H(+). It carries out the reaction L-glutaminyl-[protein] + H2O = L-glutamyl-[protein] + NH4(+). Functionally, involved in chemotaxis. Part of a chemotaxis signal transduction system that modulates chemotaxis in response to various stimuli. Catalyzes the demethylation of specific methylglutamate residues introduced into the chemoreceptors (methyl-accepting chemotaxis proteins or MCP) by CheR. Also mediates the irreversible deamidation of specific glutamine residues to glutamic acid. This Pyrococcus abyssi (strain GE5 / Orsay) protein is Protein-glutamate methylesterase/protein-glutamine glutaminase.